Here is a 59-residue protein sequence, read N- to C-terminus: Large ribosomal subunit protein bL32 (59 aa).

It belongs to the bacterial ribosomal protein bL32 family.

The polypeptide is Large ribosomal subunit protein bL32 (Limosilactobacillus reuteri (strain DSM 20016) (Lactobacillus reuteri)).